Here is a 1060-residue protein sequence, read N- to C-terminus: Probable serine/threonine-protein kinase MARK-A (1060 aa).

2 stretches are compositionally biased toward basic and acidic residues: residues 1–11 and 23–37; these read METLKEEEQFR and HLKE…EREQ. Disordered regions lie at residues 1-52 and 67-88; these read METL…LQLQ and NKIP…SISV. Composition is skewed to low complexity over residues 38–52 and 68–88; these read QQQQ…LQLQ and KIPS…SISV. The region spanning 109–361 is the Protein kinase domain; sequence YLVIKTIGRG…MEEIINHPWL (253 aa). Residues 115–123 and K139 contribute to the ATP site; that span reads IGRGQFGKV. D232 serves as the catalytic Proton acceptor. Residues 409–475 are compositionally biased toward low complexity; sequence INNINNTMAT…TTTTNATTTT (67 aa). Disordered regions lie at residues 409 to 488, 560 to 701, 714 to 886, and 899 to 966; these read INNI…NNEE, GENS…SPLC, LREK…PVHS, and DDKS…QEPR. Positions 488–528 constitute a UBA domain; it reads ELDQEIIEELVGLGFEREELCNSIRQNKYNDAASTYFLLQG. Residues 577–594 are compositionally biased toward polar residues; that stretch reads TVDSPKSTNTPQYRSSNT. 4 stretches are compositionally biased toward low complexity: residues 603 to 613, 620 to 637, 650 to 699, and 720 to 760; these read QQQQQQQQQQQ, QQQN…NNHN, STTV…NPSP, and TTTN…TSPN. The segment covering 761-770 has biased composition (polar residues); sequence LQPFSLASTA. Low complexity-rich tracts occupy residues 771–799 and 811–831; these read NNNN…SLNS and QQQQ…NSSS. Positions 837-846 are enriched in basic and acidic residues; the sequence is QRQESRKLED. 2 stretches are compositionally biased toward low complexity: residues 904–926 and 935–965; these read NSSS…TNNT and QNSN…QQEP. Residues 1008-1057 form the KA1 domain; sequence IECETEGVRFSIEICRLPRLSVNGLKFKRIGGSSWRYKSICKDLLSQMKL.

The protein belongs to the protein kinase superfamily. CAMK Ser/Thr protein kinase family. SNF1 subfamily.

It catalyses the reaction L-seryl-[protein] + ATP = O-phospho-L-seryl-[protein] + ADP + H(+). The enzyme catalyses L-threonyl-[protein] + ATP = O-phospho-L-threonyl-[protein] + ADP + H(+). This chain is Probable serine/threonine-protein kinase MARK-A (mrkA), found in Dictyostelium discoideum (Social amoeba).